The chain runs to 310 residues: Ribosomal RNA small subunit methyltransferase H (310 aa).

Residues 32 to 34, Asp52, Phe79, Asp100, and Gln107 each bind S-adenosyl-L-methionine; that span reads GGH.

Belongs to the methyltransferase superfamily. RsmH family.

The protein localises to the cytoplasm. It catalyses the reaction cytidine(1402) in 16S rRNA + S-adenosyl-L-methionine = N(4)-methylcytidine(1402) in 16S rRNA + S-adenosyl-L-homocysteine + H(+). Specifically methylates the N4 position of cytidine in position 1402 (C1402) of 16S rRNA. The chain is Ribosomal RNA small subunit methyltransferase H from Bacillus cytotoxicus (strain DSM 22905 / CIP 110041 / 391-98 / NVH 391-98).